The sequence spans 1204 residues: Probable cation-transporting ATPase 13A4 (1204 aa).

The Cytoplasmic portion of the chain corresponds to 1-32; it reads MGENPAKSHYAQLNLGEENEMEIFGYKTQCCR. The helical transmembrane segment at 33 to 53 threads the bilayer; it reads KALCIAGYILSCGALLLLFYW. The Extracellular portion of the chain corresponds to 54–219; it reads KPEWDVWANC…FSVCLWFAED (166 aa). Residues 220 to 242 traverse the membrane as a helical segment; that stretch reads YMEYAAAIIIMSPLSISLTVYDL. The Cytoplasmic portion of the chain corresponds to 243-397; it reads RQQSVKLQRL…NFRLYRDALR (155 aa). A helical membrane pass occupies residues 398–418; sequence FLMCLIAFAAIGMIYTVCVFA. Topologically, residues 419-433 are extracellular; sequence LNGEEAGEVVKKALD. Residues 434-454 form a helical membrane-spanning segment; the sequence is VITIAVPPALPAALTTGIIYT. Residues 455–897 are Cytoplasmic-facing; the sequence is QRRLKKKGIF…REGRAALVTS (443 aa). D483 serves as the catalytic 4-aspartylphosphate intermediate. D845 and D849 together coordinate Mg(2+). The helical transmembrane segment at 898–918 threads the bilayer; the sequence is FCMFKYMALYSTIQYLGVLLL. Residues 919 to 929 lie on the Extracellular side of the membrane; the sequence is YWQLNSFGNYQ. The helical transmembrane segment at 930-950 threads the bilayer; it reads FLFQDLAITTVIGMTMSFTEA. Residues 951 to 967 lie on the Cytoplasmic side of the membrane; the sequence is YPKLVPYRPPSQLVSPP. The helical transmembrane segment at 968 to 988 threads the bilayer; the sequence is LLLSVILNILFSLGMQILGFL. At 989–1043 the chain is on the extracellular side; that stretch reads MVQKQPWYSKTDIHSACLSVNNHVENSSSASSLGLHGVGGGDPTEVDNGYKSYEN. The helical transmembrane segment at 1044-1064 threads the bilayer; it reads TTVWLLSTINCLIIALVFSKG. At 1065–1075 the chain is on the cytoplasmic side; that stretch reads KPFRQPIYTNY. The chain crosses the membrane as a helical span at residues 1076 to 1096; the sequence is VFIMVLVGQLGVCLFLVFADI. At 1097–1113 the chain is on the extracellular side; that stretch reads DDLYSKMDLVCTPTTWR. The helical transmembrane segment at 1114 to 1134 threads the bilayer; the sequence is ISMVMMLAVTLAVSFLVEEAI. Topologically, residues 1135–1204 are cytoplasmic; that stretch reads IENRALWLWL…PTFDSNEDAL (70 aa).

The protein belongs to the cation transport ATPase (P-type) (TC 3.A.3) family. Type V subfamily.

It localises to the membrane. It carries out the reaction ATP + H2O = ADP + phosphate + H(+). The protein is Probable cation-transporting ATPase 13A4 (ATP13A4) of Gallus gallus (Chicken).